The sequence spans 407 residues: Protein S-acyltransferase 8 (407 aa).

2 consecutive transmembrane segments (helical) span residues 29–49 (SLPL…VFVA) and 62–82 (GYAI…LLFF). Residues 136–186 (KYCDTCMLYRPPRCSHCSICNNCVERFDHHCPWVGQCIGLRNYRYFFMFVS) form the DHHC domain. The active-site S-palmitoyl cysteine intermediate is the C166. Transmembrane regions (helical) follow at residues 181–201 (FFMF…MSAV) and 224–244 (AVVL…LTAF). The tract at residues 348–368 (AEDANNNQPHHTLDIDHERAG) is disordered. Over residues 358–368 (HTLDIDHERAG) the composition is skewed to basic and acidic residues. Position 385 is a phosphoserine (S385).

The protein belongs to the DHHC palmitoyltransferase family. Expressed in flowers and pollen.

The protein localises to the cell membrane. It carries out the reaction L-cysteinyl-[protein] + hexadecanoyl-CoA = S-hexadecanoyl-L-cysteinyl-[protein] + CoA. S-acyltransferase involved in protein lipid modification. This is Protein S-acyltransferase 8 (PAT08) from Arabidopsis thaliana (Mouse-ear cress).